The chain runs to 146 residues: MQKKVTIYTDGACSGNPGKGGWGALLMFGSVKRELSGYSPATTNNRMELMAAIQALEALKEPCEVALYSDSSYLVNAINKGWLKRWTSNNWKTAAKKPVENIDLWKMILELIRLHSVTFHKVKGHSDNEFNNRCDYLATQAIKNNR.

The RNase H type-1 domain occupies 1–143 (MQKKVTIYTD…CDYLATQAIK (143 aa)). Residues aspartate 10, glutamate 48, aspartate 70, and aspartate 135 each coordinate Mg(2+).

The protein belongs to the RNase H family. Monomer. Mg(2+) serves as cofactor.

The protein resides in the cytoplasm. It catalyses the reaction Endonucleolytic cleavage to 5'-phosphomonoester.. In terms of biological role, endonuclease that specifically degrades the RNA of RNA-DNA hybrids. The chain is Ribonuclease H from Chlorobium phaeobacteroides (strain BS1).